The sequence spans 255 residues: Geranylgeranylglyceryl phosphate synthase (255 aa).

Aspartate 34 and threonine 64 together coordinate Mg(2+). Sn-glycerol 1-phosphate contacts are provided by residues 182-188 (YLEAGSG), 213-214 (GG), and 235-236 (GN).

The protein belongs to the GGGP/HepGP synthase family. Group II subfamily. It depends on Mg(2+) as a cofactor.

It localises to the cytoplasm. It carries out the reaction sn-glycerol 1-phosphate + (2E,6E,10E)-geranylgeranyl diphosphate = sn-3-O-(geranylgeranyl)glycerol 1-phosphate + diphosphate. Its pathway is membrane lipid metabolism; glycerophospholipid metabolism. Prenyltransferase that catalyzes the transfer of the geranylgeranyl moiety of geranylgeranyl diphosphate (GGPP) to the C3 hydroxyl of sn-glycerol-1-phosphate (G1P). This reaction is the first ether-bond-formation step in the biosynthesis of archaeal membrane lipids. The polypeptide is Geranylgeranylglyceryl phosphate synthase (Saccharolobus solfataricus (strain ATCC 35092 / DSM 1617 / JCM 11322 / P2) (Sulfolobus solfataricus)).